Here is a 38-residue protein sequence, read N- to C-terminus: Toxin CSTX-16 (38 aa).

Glutamine amide occurs at positions 19 and 38.

It belongs to the cationic peptide 04 (cupiennin) family. 10 (double chain) subfamily. Expressed by the venom gland.

Its subcellular location is the secreted. This chain is Toxin CSTX-16, found in Cupiennius salei (American wandering spider).